Consider the following 330-residue polypeptide: Aspartate--ammonia ligase (330 aa).

It belongs to the class-II aminoacyl-tRNA synthetase family. AsnA subfamily.

The protein resides in the cytoplasm. It catalyses the reaction L-aspartate + NH4(+) + ATP = L-asparagine + AMP + diphosphate + H(+). The protein operates within amino-acid biosynthesis; L-asparagine biosynthesis; L-asparagine from L-aspartate (ammonia route): step 1/1. The polypeptide is Aspartate--ammonia ligase (Aeromonas salmonicida (strain A449)).